A 350-amino-acid polypeptide reads, in one-letter code: Outer membrane protein A (350 aa).

Positions 1–21 (MKKTAIAIAVALAGFATVAQA) are cleaved as a signal peptide. 8 consecutive transmembrane segments (beta stranded) span residues 27–37 (TWYAGAKLGWS), 55–66 (QLGAGAFGGYQV), 70–78 (VGFEMGYDW), 96–107 (QGVQLTAKLGYP), 112–120 (LDVYTRLGG), 146–155 (PVFAGGIEYA), 160–167 (IATRLEYQ), and 186–194 (LLSVGVSYR). 4 repeat units span residues 205–206 (AP), 207–208 (AP), 209–210 (AP), and 211–212 (AP). The tract at residues 205-212 (APAPAPAP) is 4 X 2 AA tandem repeats of A-P. The OmpA-like domain maps to 214–342 (VQTKHFTLKS…RVEIEVKGVK (129 aa)). Residues C315 and C327 are joined by a disulfide bond.

It belongs to the outer membrane OOP (TC 1.B.6) superfamily. OmpA family. Monomer and homodimer.

It is found in the cell outer membrane. Functionally, with TolR probably plays a role in maintaining the position of the peptidoglycan cell wall in the periplasm. Acts as a porin with low permeability that allows slow penetration of small solutes; an internal gate slows down solute passage. In terms of biological role, required for conjugation with F-type plasmids; probably serves as the mating receptor on recipient cells. The sequence is that of Outer membrane protein A from Salmonella typhi.